The sequence spans 462 residues: Elongation factor 1-alpha 1 (462 aa).

The residue at position 2 (Gly2) is a N,N,N-trimethylglycine. Positions Lys5 to Thr242 constitute a tr-type G domain. The interval Gly14 to Ser21 is G1. Gly14–Ser21 contributes to the GTP binding site. N6,N6,N6-trimethyllysine; alternate is present on Lys36. The residue at position 36 (Lys36) is an N6,N6-dimethyllysine; alternate. Lys36 carries the post-translational modification N6-methyllysine; alternate. Position 55 is an N6,N6-dimethyllysine (Lys55). Residues Gly70–Asp74 are G2. Lys79 is modified (N6,N6,N6-trimethyllysine; by EEF1AKMT1). The segment at Asp91–Gly94 is G3. A GTP-binding site is contributed by Asn153–Asp156. A G4 region spans residues Asn153–Asp156. Residue Lys165 is modified to N6,N6,N6-trimethyllysine; alternate; by EEF1AKMT3. Lys165 bears the N6,N6-dimethyllysine; alternate; by EEF1AKMT3 mark. At Lys165 the chain carries N6-acetyllysine; alternate. At Lys165 the chain carries N6-methyllysine; alternate; by EEF1AKMT3. Lys172 is modified (N6-acetyllysine). Ser194–Trp196 provides a ligand contact to GTP. Residues Ser194–Trp196 form a G5 region. The residue at position 273 (Lys273) is an N6-acetyllysine. Position 300 is a phosphoserine; by TGFBR1 (Ser300). Glu301 is modified (5-glutamyl glycerylphosphorylethanolamine). Lys318 is modified (N6,N6,N6-trimethyllysine; by EEF1AKMT2). Position 374 is a 5-glutamyl glycerylphosphorylethanolamine (Glu374). Lys385 participates in a covalent cross-link: Glycyl lysine isopeptide (Lys-Gly) (interchain with G-Cter in ubiquitin). An N6-acetyllysine; alternate modification is found at Lys392. At Lys392 the chain carries N6-succinyllysine; alternate. Thr432 carries the phosphothreonine; by PASK modification. Lys439 is subject to N6-acetyllysine.

Belongs to the TRAFAC class translation factor GTPase superfamily. Classic translation factor GTPase family. EF-Tu/EF-1A subfamily. In terms of assembly, found in a nuclear export complex with XPO5, EEF1A1, Ran and aminoacylated tRNA. Interacts with PARP1 and TXK. Interacts with KARS1. May interact with ERGIC2. Interacts with IFIT1 (via TPR repeats 4-7). Interacts with DLC1, facilitating distribution to the membrane periphery and ruffles upon growth factor stimulation. Interacts with ZPR1; the interaction occurs in a epidermal growth factor (EGF)-dependent manner. Interacts with PPP1R16B. Interacts with SPHK1 and SPHK2; both interactions increase SPHK1 and SPHK2 kinase activity. Interacts with guanyl-nucleotide exchange factor EEF1B2. Interacts (via middle-region) with HTATIP2 (via N-terminus); the interaction is direct and competes with EEF1A1 binding to guanyl-nucleotide exchange factor EEF1B2, thereby inhibiting GDP for GTP exchange and reactivation of EEF1A1. Interacts with tRNA. Post-translationally, ISGylated. In terms of processing, phosphorylated by TXK. Phosphorylation by PASK increases translation efficiency. Phosphorylated by ROCK2. Phosphorylation by TGFBR1 inhibits translation elongation. Trimethylated at Lys-79 by EEF1AKMT1. Methylated at Lys-165 by EEF1AKMT3, methylation by EEF1AKMT3 is dynamic as well as inducible by stress conditions, such as ER-stress, and plays a regulatory role on mRNA translation. Trimethylated at Lys-318 by EEF1AKMT2. Mono-, di-, and trimethylated at Lys-36 by EEF1AKMT4; trimethylated form is predominant. Methylation by EEF1AKMT4 contributes to the fine-tuning of translation rates for a subset of tRNAs. Trimethylated at Gly-2 by METTL13. Mono- and dimethylated at Lys-55 by METTL13; dimethylated form is predominant. Post-translationally, ubiquitinated at Lys-385 by RNF14 in response to ribosome collisions (ribosome stalling), leading to its degradation by the proteasome and rescue of stalled ribosomes.

The protein localises to the cytoplasm. Its subcellular location is the nucleus. The protein resides in the nucleolus. It is found in the cell membrane. The catalysed reaction is GTP + H2O = GDP + phosphate + H(+). Functionally, translation elongation factor that catalyzes the GTP-dependent binding of aminoacyl-tRNA (aa-tRNA) to the A-site of ribosomes during the elongation phase of protein synthesis. Base pairing between the mRNA codon and the aa-tRNA anticodon promotes GTP hydrolysis, releasing the aa-tRNA from EEF1A1 and allowing its accommodation into the ribosome. The growing protein chain is subsequently transferred from the P-site peptidyl tRNA to the A-site aa-tRNA, extending it by one amino acid through ribosome-catalyzed peptide bond formation. Also plays a role in the positive regulation of IFNG transcription in T-helper 1 cells as part of an IFNG promoter-binding complex with TXK and PARP1. Also plays a role in cytoskeleton organization by promoting actin bundling. The protein is Elongation factor 1-alpha 1 (EEF1A1) of Cricetulus griseus (Chinese hamster).